Consider the following 755-residue polypeptide: Biodegradative arginine decarboxylase (755 aa).

At Lys386 the chain carries N6-(pyridoxal phosphate)lysine.

This sequence belongs to the Orn/Lys/Arg decarboxylase class-I family. In terms of assembly, homodecamer. The basic unit is a homodimer, organized into a ring of giving a pentamer of five homodimers. It depends on pyridoxal 5'-phosphate as a cofactor.

The protein localises to the cytoplasm. The enzyme catalyses L-arginine + H(+) = agmatine + CO2. With respect to regulation, homodimers are probably inactive, their assembly into a homodecamer at low pH requires neutralization of negatively charged residues. This uses cytoplasmic protons, contributing pH regulation and stabilizes the homodecamer. In terms of biological role, component of the acid-resistance (AR) system allowing enteric pathogens to survive the acidic environment in the stomach. ADC can be found in two forms: biodegradative (this enzyme) and biosynthetic (speA). The biodegradative form plays a role in regulating pH by consuming proteins. Converts arginine imported by AdiC to agmatine which is then exported by AdiC. The polypeptide is Biodegradative arginine decarboxylase (adiA) (Escherichia coli (strain K12)).